The chain runs to 1182 residues: WD repeat-containing protein on Y chromosome (1182 aa).

8 WD repeats span residues 155–199 (EEIT…LRSA), 323–362 (RIPLGVSVFYVSEIKNILVTGGPDTFVRIWDVYISSEPSA), 366–405 (GHNGGIVAVFVQPEENKVYSVDYHKIIKVWDLQEHTLLQT), 456–495 (THAAPVSVVLYNRLFRNIVTCGLDSYIIVWDPWTGRRKII), 508–547 (TIDIEITAACFDPLEQFLLTGARDGSLKIWNYNNAVVVRN), 595–635 (FHTD…RRYN), 740–779 (KTGDCVLTMATDRKNRFLYTGTAFGYIKVWHIVNYCIPKA), and 823–862 (GHLKAINSIGFINLPKIIFSGSHDYSCRLWTQGGRYLGTL). The disordered stretch occupies residues 1031–1182 (TKAGANLDQP…PKAKTDRETH (152 aa)). 2 stretches are compositionally biased toward low complexity: residues 1079-1092 (GVSSGYGKVSVSQG) and 1103-1121 (TTSLSKPKTSSSPSKPKGS).

This chain is WD repeat-containing protein on Y chromosome, found in Drosophila virilis (Fruit fly).